Consider the following 673-residue polypeptide: uncharacterized protein (673 aa).

The Cytoplasmic portion of the chain corresponds to 1–208 (MSTHSNDYFS…STGQLELPPD (208 aa)). Phosphoserine is present on residues S57, S112, and S172. A helical transmembrane segment spans residues 209 to 229 (GGYGWVVTFCVFLTMFSTWGC). Residue N230 is glycosylated (N-linked (GlcNAc...) asparagine). Residues 230–255 (NASFGVDLAYYLNHDTYPGASKYDYA) are Lumenal-facing. Residues 256–276 (LIAGLTVFLGQLLSPLVMALM) form a helical membrane-spanning segment. Position 277 (R277) is a topological domain, cytoplasmic. The chain crosses the membrane as a helical span at residues 278 to 298 (IIGLRTTMLFGDAVMLAAYLL). Over 299-315 (ASFTTKLWQLYVTQGFM) the chain is Lumenal. The helical transmembrane segment at 316–336 (VGCSISLIFVPATTVLPGWFL) threads the bilayer. Residues 337–339 (KKR) are Cytoplasmic-facing. The helical transmembrane segment at 340 to 360 (AVAMGVSLLGTGAGGVVYGLA) threads the bilayer. Topologically, residues 361-372 (TNKMLSDFGNTR) are lumenal. The chain crosses the membrane as a helical span at residues 373–393 (WCLRIIGISCSISVLVAIALL). Residues 394–426 (KERNPTPAIGLKSPRAMFEQLKAMFSLKVITKP) lie on the Cytoplasmic side of the membrane. Residues 427–447 (FVVLIALWFMFALFAYNMMVF) traverse the membrane as a helical segment. Residues 448–504 (TLSSYAISKGLSSHDASTLTAILNGSQSIGRPLMGLAGDKFGRANVTIVLTTLLTIY) lie on the Lumenal side of the membrane. N-linked (GlcNAc...) asparagine glycans are attached at residues N471 and N492. A helical membrane pass occupies residues 505 to 525 (MFAFWIPAHTFVQLIFFSILV). At 526–549 (GSCVGVANVMNTVLIADMVKPEEF) the chain is on the cytoplasmic side. The chain crosses the membrane as a helical span at residues 550–570 (LPAWAFVNYCGAPFLLVCEVI). Topologically, residues 571-584 (AQALTVEKDKSNPY) are lumenal. The helical transmembrane segment at 585–605 (LHAQIFCGCCFIAALILISIL) threads the bilayer. Residues 606 to 673 (REYSIRMKLT…FLRMVYPMKV (68 aa)) are Cytoplasmic-facing. Residue S637 is modified to Phosphoserine.

The protein belongs to the major facilitator superfamily. Monocarboxylate porter (TC 2.A.1.13) family.

It localises to the endoplasmic reticulum membrane. This is an uncharacterized protein from Saccharomyces cerevisiae (strain ATCC 204508 / S288c) (Baker's yeast).